The sequence spans 592 residues: Aspartate--tRNA(Asp/Asn) ligase (592 aa).

L-aspartate is bound at residue Glu-176. Residues 200 to 203 (QLYK) form an aspartate region. Position 222 (Arg-222) interacts with L-aspartate. ATP is bound by residues 222 to 224 (RDE) and Gln-231. His-452 is an L-aspartate binding site. Glu-486 is an ATP binding site. An L-aspartate-binding site is contributed by Arg-493. 538–541 (GVDR) serves as a coordination point for ATP.

This sequence belongs to the class-II aminoacyl-tRNA synthetase family. Type 1 subfamily. As to quaternary structure, homodimer.

Its subcellular location is the cytoplasm. It catalyses the reaction tRNA(Asx) + L-aspartate + ATP = L-aspartyl-tRNA(Asx) + AMP + diphosphate. Aspartyl-tRNA synthetase with relaxed tRNA specificity since it is able to aspartylate not only its cognate tRNA(Asp) but also tRNA(Asn). Reaction proceeds in two steps: L-aspartate is first activated by ATP to form Asp-AMP and then transferred to the acceptor end of tRNA(Asp/Asn). The polypeptide is Aspartate--tRNA(Asp/Asn) ligase (Rhodopirellula baltica (strain DSM 10527 / NCIMB 13988 / SH1)).